The sequence spans 169 residues: Transcription antitermination protein NusB (169 aa).

A disordered region spans residues 147–169; it reads RGLIDQSFSRPQKPESEATEIEE.

The protein belongs to the NusB family.

Its function is as follows. Involved in transcription antitermination. Required for transcription of ribosomal RNA (rRNA) genes. Binds specifically to the boxA antiterminator sequence of the ribosomal RNA (rrn) operons. This Chlorobium chlorochromatii (strain CaD3) protein is Transcription antitermination protein NusB.